Reading from the N-terminus, the 1092-residue chain is Probable arabinosyltransferase A (1092 aa).

A run of 13 helical transmembrane segments spans residues Ile-21–Leu-43, Ala-214–Leu-233, Gly-249–Ala-271, Val-324–Leu-346, Val-353–Leu-372, Pro-382–Ile-399, Leu-404–Ile-426, Phe-517–Leu-534, Gly-541–Leu-563, Trp-568–Phe-590, Ala-602–Tyr-624, Ile-639–Trp-661, and Ala-682–Val-704. The interval Pro-772 to Asp-798 is disordered.

The protein belongs to the emb family.

The protein localises to the cell membrane. Arabinosyl transferase responsible for the polymerization of arabinose into the arabinan of arabinogalactan. The sequence is that of Probable arabinosyltransferase A (embA) from Mycolicibacterium smegmatis (Mycobacterium smegmatis).